The primary structure comprises 506 residues: Maturase K (506 aa).

Belongs to the intron maturase 2 family. MatK subfamily.

Its subcellular location is the plastid. The protein localises to the chloroplast. In terms of biological role, usually encoded in the trnK tRNA gene intron. Probably assists in splicing its own and other chloroplast group II introns. The sequence is that of Maturase K from Arabis alpina (Alpine rock-cress).